Consider the following 473-residue polypeptide: Aspartyl/glutamyl-tRNA(Asn/Gln) amidotransferase subunit B (473 aa).

It belongs to the GatB/GatE family. GatB subfamily. In terms of assembly, heterotrimer of A, B and C subunits.

The enzyme catalyses L-glutamyl-tRNA(Gln) + L-glutamine + ATP + H2O = L-glutaminyl-tRNA(Gln) + L-glutamate + ADP + phosphate + H(+). It carries out the reaction L-aspartyl-tRNA(Asn) + L-glutamine + ATP + H2O = L-asparaginyl-tRNA(Asn) + L-glutamate + ADP + phosphate + 2 H(+). Its function is as follows. Allows the formation of correctly charged Asn-tRNA(Asn) or Gln-tRNA(Gln) through the transamidation of misacylated Asp-tRNA(Asn) or Glu-tRNA(Gln) in organisms which lack either or both of asparaginyl-tRNA or glutaminyl-tRNA synthetases. The reaction takes place in the presence of glutamine and ATP through an activated phospho-Asp-tRNA(Asn) or phospho-Glu-tRNA(Gln). The chain is Aspartyl/glutamyl-tRNA(Asn/Gln) amidotransferase subunit B from Levilactobacillus brevis (strain ATCC 367 / BCRC 12310 / CIP 105137 / JCM 1170 / LMG 11437 / NCIMB 947 / NCTC 947) (Lactobacillus brevis).